We begin with the raw amino-acid sequence, 573 residues long: Estrogen receptor beta (573 aa).

Residues 15-170 are modulating; it reads QEVDSSKVGE…CFAGKGDMHF (156 aa). NR C4-type zinc fingers lie at residues 171-191 and 207-231; these read CAVC…CEGC and CPAT…LRKC. A DNA-binding region (nuclear receptor) is located at residues 171–236; sequence CAVCHDYASG…RLRKCYEVGM (66 aa). The NR LBD domain maps to 291 to 527; the sequence is TPEQLINRII…DLLLEMLDAN (237 aa). Low complexity-rich tracts occupy residues 534–552 and 559–573; these read MSAS…AQSQ and CSGE…SSTI. A disordered region spans residues 534-573; the sequence is MSASYSSQPSPWSQAAQSQPGPPPSCSGECPCPPKESSTI.

This sequence belongs to the nuclear hormone receptor family. NR3 subfamily. As to quaternary structure, binds DNA as a homodimer. Can form a heterodimer with ER-alpha. Liver.

Its subcellular location is the nucleus. Functionally, binds estrogens with an affinity similar to that of ER-alpha, and activates expression of reporter genes containing estrogen response elements (ERE) in an estrogen-dependent manner. The protein is Estrogen receptor beta (esr2) of Anguilla japonica (Japanese eel).